A 328-amino-acid polypeptide reads, in one-letter code: 4-hydroxy-3-methylbut-2-enyl diphosphate reductase (328 aa).

Residue C13 participates in [4Fe-4S] cluster binding. (2E)-4-hydroxy-3-methylbut-2-enyl diphosphate is bound by residues H41 and H75. Positions 41 and 75 each coordinate dimethylallyl diphosphate. Isopentenyl diphosphate is bound by residues H41 and H75. [4Fe-4S] cluster is bound at residue C97. H125 is a binding site for (2E)-4-hydroxy-3-methylbut-2-enyl diphosphate. Residue H125 participates in dimethylallyl diphosphate binding. H125 provides a ligand contact to isopentenyl diphosphate. The active-site Proton donor is E127. T168 contacts (2E)-4-hydroxy-3-methylbut-2-enyl diphosphate. C229 lines the [4Fe-4S] cluster pocket. S257, S258, N259, and S306 together coordinate (2E)-4-hydroxy-3-methylbut-2-enyl diphosphate. The dimethylallyl diphosphate site is built by S257, S258, N259, and S306. Isopentenyl diphosphate contacts are provided by S257, S258, N259, and S306.

Belongs to the IspH family. [4Fe-4S] cluster serves as cofactor.

The enzyme catalyses isopentenyl diphosphate + 2 oxidized [2Fe-2S]-[ferredoxin] + H2O = (2E)-4-hydroxy-3-methylbut-2-enyl diphosphate + 2 reduced [2Fe-2S]-[ferredoxin] + 2 H(+). It carries out the reaction dimethylallyl diphosphate + 2 oxidized [2Fe-2S]-[ferredoxin] + H2O = (2E)-4-hydroxy-3-methylbut-2-enyl diphosphate + 2 reduced [2Fe-2S]-[ferredoxin] + 2 H(+). Its pathway is isoprenoid biosynthesis; dimethylallyl diphosphate biosynthesis; dimethylallyl diphosphate from (2E)-4-hydroxy-3-methylbutenyl diphosphate: step 1/1. It functions in the pathway isoprenoid biosynthesis; isopentenyl diphosphate biosynthesis via DXP pathway; isopentenyl diphosphate from 1-deoxy-D-xylulose 5-phosphate: step 6/6. In terms of biological role, catalyzes the conversion of 1-hydroxy-2-methyl-2-(E)-butenyl 4-diphosphate (HMBPP) into a mixture of isopentenyl diphosphate (IPP) and dimethylallyl diphosphate (DMAPP). Acts in the terminal step of the DOXP/MEP pathway for isoprenoid precursor biosynthesis. The protein is 4-hydroxy-3-methylbut-2-enyl diphosphate reductase of Chlorobium phaeobacteroides (strain DSM 266 / SMG 266 / 2430).